The primary structure comprises 388 residues: MKIHEYQAKEILRKFGVAVPRGYLAVTPLEAEGAARQLGGGISAVKAQIHAGGRGKGGGVKLARSPDEARQHAEAMLGMMLKTPQTGPDGQEVRKVYVEEGCRIARELYLGMTLDREIGRLAVMASVEGGVDIEEVAAKHPDKILREWISPLTGLMPFQARRLAFGLGLTGDSVTAFVRFATGLYNAYVATDASLAEINPLVITVGGEVLALDAKMNFDDNALYRHPDIAAMRDPDEEDPKETQAKEYDLSYIALDGDIGCMVNGAGLAMATMDVIKLSGGQPANFLDVGGGADEDKVTAAFKIILSDPHVKAVLVNIFGGIMKCDVIANGIVAAAKQVGLSIPLVVRLEGTNVELGKDILAHSELKIIPADDLGDAARKVVQAARAA.

The region spanning 9–244 (KEILRKFGVA…PDEEDPKETQ (236 aa)) is the ATP-grasp domain. ATP-binding positions include Lys46, 53–55 (GRG), Glu99, Cys102, and Glu107. Asn199 and Asp213 together coordinate Mg(2+). Residues Asn264 and 321 to 323 (GIM) each bind substrate.

Belongs to the succinate/malate CoA ligase beta subunit family. In terms of assembly, heterotetramer of two alpha and two beta subunits. Mg(2+) serves as cofactor.

It catalyses the reaction succinate + ATP + CoA = succinyl-CoA + ADP + phosphate. It carries out the reaction GTP + succinate + CoA = succinyl-CoA + GDP + phosphate. The protein operates within carbohydrate metabolism; tricarboxylic acid cycle; succinate from succinyl-CoA (ligase route): step 1/1. In terms of biological role, succinyl-CoA synthetase functions in the citric acid cycle (TCA), coupling the hydrolysis of succinyl-CoA to the synthesis of either ATP or GTP and thus represents the only step of substrate-level phosphorylation in the TCA. The beta subunit provides nucleotide specificity of the enzyme and binds the substrate succinate, while the binding sites for coenzyme A and phosphate are found in the alpha subunit. This chain is Succinate--CoA ligase [ADP-forming] subunit beta, found in Anaeromyxobacter dehalogenans (strain 2CP-1 / ATCC BAA-258).